Reading from the N-terminus, the 1102-residue chain is Protein MMS22-like (1102 aa).

This sequence belongs to the MMS22 family. MMS22L subfamily.

The protein resides in the nucleus. It is found in the chromosome. Its function is as follows. Involved in recombination-dependent repair of stalled or collapsed replication forks. The protein is Protein MMS22-like of Drosophila melanogaster (Fruit fly).